Consider the following 205-residue polypeptide: Large ribosomal subunit protein uL13 (205 aa).

It belongs to the universal ribosomal protein uL13 family.

The protein is Large ribosomal subunit protein uL13 (RPL13A) of Lupinus luteus (European yellow lupine).